We begin with the raw amino-acid sequence, 236 residues long: Mammalian ependymin-related protein 1 (236 aa).

Positions 1–35 (MPRRAPLRVARGSLDAWLLGGLWVCALGCLCGVGM) are cleaved as a signal peptide. 3 disulfide bridges follow: C54-C184, C100-C234, and C125-C222. N142 and N194 each carry an N-linked (GlcNAc...) asparagine glycan.

The protein belongs to the ependymin family. In terms of assembly, homodimer. Post-translationally, N-glycosylated; the glycan contains mannose-6-phosphate moieties.

The protein localises to the lysosome lumen. It is found in the secreted. Functionally, binds anionic lipids and gangliosides at acidic pH. This Bos taurus (Bovine) protein is Mammalian ependymin-related protein 1 (EPDR1).